A 60-amino-acid polypeptide reads, in one-letter code: Large ribosomal subunit protein bL33 (60 aa).

This sequence belongs to the bacterial ribosomal protein bL33 family.

This is Large ribosomal subunit protein bL33 from Flavobacterium psychrophilum (strain ATCC 49511 / DSM 21280 / CIP 103535 / JIP02/86).